Reading from the N-terminus, the 88-residue chain is Large ribosomal subunit protein bL31B (88 aa).

It belongs to the bacterial ribosomal protein bL31 family. Type B subfamily. In terms of assembly, part of the 50S ribosomal subunit.

This chain is Large ribosomal subunit protein bL31B, found in Janthinobacterium sp. (strain Marseille) (Minibacterium massiliensis).